A 258-amino-acid polypeptide reads, in one-letter code: Ribosomal RNA small subunit methyltransferase A (258 aa).

Positions 12, 14, 38, 59, 83, and 100 each coordinate S-adenosyl-L-methionine.

This sequence belongs to the class I-like SAM-binding methyltransferase superfamily. rRNA adenine N(6)-methyltransferase family. RsmA subfamily.

The protein localises to the cytoplasm. It catalyses the reaction adenosine(1518)/adenosine(1519) in 16S rRNA + 4 S-adenosyl-L-methionine = N(6)-dimethyladenosine(1518)/N(6)-dimethyladenosine(1519) in 16S rRNA + 4 S-adenosyl-L-homocysteine + 4 H(+). Specifically dimethylates two adjacent adenosines (A1518 and A1519) in the loop of a conserved hairpin near the 3'-end of 16S rRNA in the 30S particle. May play a critical role in biogenesis of 30S subunits. This chain is Ribosomal RNA small subunit methyltransferase A, found in Metamycoplasma arthritidis (strain 158L3-1) (Mycoplasma arthritidis).